Consider the following 30-residue polypeptide: MSELSAAPLRPGKTQESEKGIYYAREGCVS.

This is an uncharacterized protein from Treponema pallidum (strain Nichols).